Reading from the N-terminus, the 433-residue chain is Homogentisate 1,2-dioxygenase (433 aa).

The active-site Proton acceptor is the His288. 2 residues coordinate Fe cation: His331 and Glu337. Tyr346 and His367 together coordinate homogentisate. His367 contacts Fe cation.

The protein belongs to the homogentisate dioxygenase family. In terms of assembly, hexamer; dimer of trimers. Fe cation is required as a cofactor.

The enzyme catalyses homogentisate + O2 = 4-maleylacetoacetate + H(+). Its pathway is amino-acid degradation; L-phenylalanine degradation; acetoacetate and fumarate from L-phenylalanine: step 4/6. Functionally, involved in the catabolism of homogentisate (2,5-dihydroxyphenylacetate or 2,5-OH-PhAc), a central intermediate in the degradation of phenylalanine and tyrosine. Catalyzes the oxidative ring cleavage of the aromatic ring of homogentisate to yield maleylacetoacetate. The chain is Homogentisate 1,2-dioxygenase from Pseudomonas entomophila (strain L48).